The chain runs to 351 residues: Histidinol-phosphate aminotransferase (351 aa).

Lys213 carries the N6-(pyridoxal phosphate)lysine modification.

Belongs to the class-II pyridoxal-phosphate-dependent aminotransferase family. Histidinol-phosphate aminotransferase subfamily. As to quaternary structure, homodimer. Pyridoxal 5'-phosphate is required as a cofactor.

It carries out the reaction L-histidinol phosphate + 2-oxoglutarate = 3-(imidazol-4-yl)-2-oxopropyl phosphate + L-glutamate. The catalysed reaction is L-histidine + 2-oxoglutarate = 3-(imidazol-5-yl)pyruvate + L-glutamate. It functions in the pathway amino-acid biosynthesis; L-histidine biosynthesis; L-histidine from 5-phospho-alpha-D-ribose 1-diphosphate: step 7/9. The protein is Histidinol-phosphate aminotransferase of Caldanaerobacter subterraneus subsp. tengcongensis (strain DSM 15242 / JCM 11007 / NBRC 100824 / MB4) (Thermoanaerobacter tengcongensis).